A 443-amino-acid polypeptide reads, in one-letter code: UDP-N-acetylglucosamine 1-carboxyvinyltransferase 1 (443 aa).

22–23 contributes to the phosphoenolpyruvate binding site; it reads KN. Residue R95 coordinates UDP-N-acetyl-alpha-D-glucosamine. The Proton donor role is filled by C119. A 2-(S-cysteinyl)pyruvic acid O-phosphothioketal modification is found at C119. Residues 124–128, D308, and V330 each bind UDP-N-acetyl-alpha-D-glucosamine; that span reads RPIDL.

The protein belongs to the EPSP synthase family. MurA subfamily.

The protein localises to the cytoplasm. It carries out the reaction phosphoenolpyruvate + UDP-N-acetyl-alpha-D-glucosamine = UDP-N-acetyl-3-O-(1-carboxyvinyl)-alpha-D-glucosamine + phosphate. The protein operates within cell wall biogenesis; peptidoglycan biosynthesis. In terms of biological role, cell wall formation. Adds enolpyruvyl to UDP-N-acetylglucosamine. The protein is UDP-N-acetylglucosamine 1-carboxyvinyltransferase 1 of Oceanobacillus iheyensis (strain DSM 14371 / CIP 107618 / JCM 11309 / KCTC 3954 / HTE831).